We begin with the raw amino-acid sequence, 500 residues long: Glycerol kinase (500 aa).

ADP is bound at residue Thr13. ATP contacts are provided by Thr13, Thr14, and Ser15. A sn-glycerol 3-phosphate-binding site is contributed by Thr13. Arg17 contributes to the ADP binding site. Sn-glycerol 3-phosphate is bound by residues Arg83, Glu84, Tyr135, and Asp244. Glycerol is bound by residues Arg83, Glu84, Tyr135, Asp244, and Gln245. Positions 266 and 309 each coordinate ADP. 4 residues coordinate ATP: Thr266, Gly309, Gln313, and Gly410. Gly410 and Asn414 together coordinate ADP.

This sequence belongs to the FGGY kinase family.

The enzyme catalyses glycerol + ATP = sn-glycerol 3-phosphate + ADP + H(+). The protein operates within polyol metabolism; glycerol degradation via glycerol kinase pathway; sn-glycerol 3-phosphate from glycerol: step 1/1. Inhibited by fructose 1,6-bisphosphate (FBP). Its function is as follows. Key enzyme in the regulation of glycerol uptake and metabolism. Catalyzes the phosphorylation of glycerol to yield sn-glycerol 3-phosphate. The chain is Glycerol kinase from Burkholderia pseudomallei (strain K96243).